The sequence spans 338 residues: Mitochondrial E3 ubiquitin protein ligase 1 (338 aa).

Topologically, residues 1–3 (MEF) are cytoplasmic. A helical transmembrane segment spans residues 4–24 (LHESVALGVDLLILGLCAREY). Residues 25 to 227 (VHYKRTAKVL…LIKRFEDAKT (203 aa)) lie on the Mitochondrial intermembrane side of the membrane. A helical membrane pass occupies residues 228-248 (TTILKLVVCSTISAILVAFIA). Residues 249–338 (KKLYRKRKQE…IVSKAAAFIA (90 aa)) lie on the Cytoplasmic side of the membrane. The segment at 290–326 (CVVCSTNPKEIILLPCGHVCLCEDCAQKISVTCPVCR) adopts an RING-type zinc-finger fold.

As to quaternary structure, interacts with Marf. In terms of processing, auto-ubiquitinated.

The protein resides in the mitochondrion outer membrane. The enzyme catalyses S-ubiquitinyl-[E2 ubiquitin-conjugating enzyme]-L-cysteine + [acceptor protein]-L-lysine = [E2 ubiquitin-conjugating enzyme]-L-cysteine + N(6)-ubiquitinyl-[acceptor protein]-L-lysine.. Functionally, exhibits weak E3 ubiquitin-protein ligase activity. E3 ubiquitin ligases accept ubiquitin from an E2 ubiquitin-conjugating enzyme in the form of a thioester and then directly transfer the ubiquitin to targeted substrates. Plays a role in the control of mitochondrial morphology by promoting mitochondrial fission. Negatively regulates the mitochondrial fusion protein marf by promoting its ubiquitination, acting in a pathway that is parallel to the park/pink1 regulatory pathway. The protein is Mitochondrial E3 ubiquitin protein ligase 1 of Drosophila melanogaster (Fruit fly).